A 178-amino-acid polypeptide reads, in one-letter code: Plasmid transfer protein TraF (178 aa).

The signal sequence occupies residues 1–30 (MSRILKRIAAGVVIAGVAALLLAAGGYAAG).

The protein belongs to the peptidase S26C family.

Its subcellular location is the periplasm. In terms of biological role, required for donor-specific phage sensitivity. May be involved in pilus assembly. The polypeptide is Plasmid transfer protein TraF (traF) (Escherichia coli).